Consider the following 1590-residue polypeptide: Pentafunctional AROM polypeptide (1590 aa).

Residues 1-400 form a 3-dehydroquinate synthase region; sequence MSTANGSSPT…HEPKASSVDD (400 aa). NAD(+) is bound by residues 49–51, 96–99, 127–129, and aspartate 132; these read DTN, EGSK, and GGV. Arginine 143 lines the 7-phospho-2-dehydro-3-deoxy-D-arabino-heptonate pocket. Residue 152 to 153 coordinates NAD(+); it reads TT. 7-phospho-2-dehydro-3-deoxy-D-arabino-heptonate contacts are provided by aspartate 159 and lysine 165. Lysine 174 is a binding site for NAD(+). 7-phospho-2-dehydro-3-deoxy-D-arabino-heptonate is bound at residue asparagine 175. Residues 192–195 and asparagine 203 contribute to the NAD(+) site; that span reads FLNT. Glutamate 207 is a binding site for Zn(2+). Residues 207 to 210 and lysine 266 each bind 7-phospho-2-dehydro-3-deoxy-D-arabino-heptonate; that span reads EVIK. The active-site Proton acceptor; for 3-dehydroquinate synthase activity is glutamate 276. 7-phospho-2-dehydro-3-deoxy-D-arabino-heptonate-binding positions include 280-284 and histidine 287; that span reads RNLLN. Histidine 287 serves as a coordination point for Zn(2+). The active-site Proton acceptor; for 3-dehydroquinate synthase activity is histidine 291. Positions 303 and 372 each coordinate 7-phospho-2-dehydro-3-deoxy-D-arabino-heptonate. Histidine 303 lines the Zn(2+) pocket. Positions 413 to 856 are EPSP synthase; it reads VQPGVRPGLK…WDVLSGVFGV (444 aa). Cysteine 838 functions as the For EPSP synthase activity in the catalytic mechanism. Positions 876 to 1070 are shikimate kinase; the sequence is NRSVFVIGMR…KAKPHSFFVS (195 aa). 883–890 is an ATP binding site; it reads GMRGAGKS. The segment at 1071–1285 is 3-dehydroquinase; it reads LTVPNITAHT…AAPGQLTAAE (215 aa). Histidine 1187 functions as the Proton acceptor; for 3-dehydroquinate dehydratase activity in the catalytic mechanism. Lysine 1215 (schiff-base intermediate with substrate; for 3-dehydroquinate dehydratase activity) is an active-site residue. Residues 1298 to 1590 are shikimate dehydrogenase; sequence KRKFYLFGKP…IVMNGTSDSS (293 aa).

This sequence in the N-terminal section; belongs to the sugar phosphate cyclases superfamily. Dehydroquinate synthase family. The protein in the 2nd section; belongs to the EPSP synthase family. In the 3rd section; belongs to the shikimate kinase family. It in the 4th section; belongs to the type-I 3-dehydroquinase family. This sequence in the C-terminal section; belongs to the shikimate dehydrogenase family. In terms of assembly, homodimer. Zn(2+) is required as a cofactor.

The protein localises to the cytoplasm. It catalyses the reaction 7-phospho-2-dehydro-3-deoxy-D-arabino-heptonate = 3-dehydroquinate + phosphate. The catalysed reaction is 3-dehydroquinate = 3-dehydroshikimate + H2O. It carries out the reaction shikimate + NADP(+) = 3-dehydroshikimate + NADPH + H(+). The enzyme catalyses shikimate + ATP = 3-phosphoshikimate + ADP + H(+). It catalyses the reaction 3-phosphoshikimate + phosphoenolpyruvate = 5-O-(1-carboxyvinyl)-3-phosphoshikimate + phosphate. It participates in metabolic intermediate biosynthesis; chorismate biosynthesis; chorismate from D-erythrose 4-phosphate and phosphoenolpyruvate: step 2/7. It functions in the pathway metabolic intermediate biosynthesis; chorismate biosynthesis; chorismate from D-erythrose 4-phosphate and phosphoenolpyruvate: step 3/7. Its pathway is metabolic intermediate biosynthesis; chorismate biosynthesis; chorismate from D-erythrose 4-phosphate and phosphoenolpyruvate: step 4/7. The protein operates within metabolic intermediate biosynthesis; chorismate biosynthesis; chorismate from D-erythrose 4-phosphate and phosphoenolpyruvate: step 5/7. It participates in metabolic intermediate biosynthesis; chorismate biosynthesis; chorismate from D-erythrose 4-phosphate and phosphoenolpyruvate: step 6/7. In terms of biological role, the AROM polypeptide catalyzes 5 consecutive enzymatic reactions in prechorismate polyaromatic amino acid biosynthesis. The protein is Pentafunctional AROM polypeptide of Pyricularia oryzae (strain 70-15 / ATCC MYA-4617 / FGSC 8958) (Rice blast fungus).